The primary structure comprises 197 residues: ATP-dependent Clp protease proteolytic subunit (197 aa).

The active-site Nucleophile is S98. H123 is an active-site residue.

Belongs to the peptidase S14 family. Fourteen ClpP subunits assemble into 2 heptameric rings which stack back to back to give a disk-like structure with a central cavity, resembling the structure of eukaryotic proteasomes.

Its subcellular location is the cytoplasm. The catalysed reaction is Hydrolysis of proteins to small peptides in the presence of ATP and magnesium. alpha-casein is the usual test substrate. In the absence of ATP, only oligopeptides shorter than five residues are hydrolyzed (such as succinyl-Leu-Tyr-|-NHMec, and Leu-Tyr-Leu-|-Tyr-Trp, in which cleavage of the -Tyr-|-Leu- and -Tyr-|-Trp bonds also occurs).. In terms of biological role, cleaves peptides in various proteins in a process that requires ATP hydrolysis. Has a chymotrypsin-like activity. Plays a major role in the degradation of misfolded proteins. The chain is ATP-dependent Clp protease proteolytic subunit from Lysinibacillus sphaericus (strain C3-41).